A 275-amino-acid chain; its full sequence is Large ribosomal subunit protein uL2 (275 aa).

The interval 214–275 (RWRGNRPTVR…NKFILSHRNK (62 aa)) is disordered. Over residues 255–275 (KGKKTRSNKRTNKFILSHRNK) the composition is skewed to basic residues.

The protein belongs to the universal ribosomal protein uL2 family. In terms of assembly, part of the 50S ribosomal subunit. Forms a bridge to the 30S subunit in the 70S ribosome.

One of the primary rRNA binding proteins. Required for association of the 30S and 50S subunits to form the 70S ribosome, for tRNA binding and peptide bond formation. It has been suggested to have peptidyltransferase activity; this is somewhat controversial. Makes several contacts with the 16S rRNA in the 70S ribosome. The sequence is that of Large ribosomal subunit protein uL2 from Blochmanniella pennsylvanica (strain BPEN).